Consider the following 436-residue polypeptide: 3-ketoacyl-CoA thiolase (436 aa).

The active-site Acyl-thioester intermediate is cysteine 99. Catalysis depends on proton acceptor residues histidine 392 and cysteine 422.

The protein belongs to the thiolase-like superfamily. Thiolase family. As to quaternary structure, heterotetramer of two alpha chains (FadJ) and two beta chains (FadI).

Its subcellular location is the cytoplasm. It catalyses the reaction an acyl-CoA + acetyl-CoA = a 3-oxoacyl-CoA + CoA. It participates in lipid metabolism; fatty acid beta-oxidation. Functionally, catalyzes the final step of fatty acid oxidation in which acetyl-CoA is released and the CoA ester of a fatty acid two carbons shorter is formed. In Aeromonas salmonicida (strain A449), this protein is 3-ketoacyl-CoA thiolase.